We begin with the raw amino-acid sequence, 137 residues long: Small ribosomal subunit protein uS12 (137 aa).

The interval 1–57 (MPTINQLVRKPRQSKIKKSDSPALNKGFNSKKKKFTDLNSPQKRGVCTRVGTMTPRK) is disordered. Aspartate 102 bears the 3-methylthioaspartic acid mark. The interval 118 to 137 (SGVDGRRQGRSLYGTKKPKN) is disordered.

It belongs to the universal ribosomal protein uS12 family. As to quaternary structure, part of the 30S ribosomal subunit. Contacts proteins S8 and S17. May interact with IF1 in the 30S initiation complex.

With S4 and S5 plays an important role in translational accuracy. Its function is as follows. Interacts with and stabilizes bases of the 16S rRNA that are involved in tRNA selection in the A site and with the mRNA backbone. Located at the interface of the 30S and 50S subunits, it traverses the body of the 30S subunit contacting proteins on the other side and probably holding the rRNA structure together. The combined cluster of proteins S8, S12 and S17 appears to hold together the shoulder and platform of the 30S subunit. This Staphylococcus aureus (strain COL) protein is Small ribosomal subunit protein uS12.